The primary structure comprises 78 residues: Small ribosomal subunit protein uS15 (78 aa).

The protein belongs to the universal ribosomal protein uS15 family. In terms of assembly, part of the 30S ribosomal subunit. Forms a bridge to the 50S subunit in the 70S ribosome, contacting the 23S rRNA.

Functionally, one of the primary rRNA binding proteins, it binds directly to 16S rRNA where it helps nucleate assembly of the platform of the 30S subunit by binding and bridging several RNA helices of the 16S rRNA. Its function is as follows. Forms an intersubunit bridge (bridge B4) with the 23S rRNA of the 50S subunit in the ribosome. The sequence is that of Small ribosomal subunit protein uS15 from Karelsulcia muelleri (strain GWSS) (Sulcia muelleri).